A 238-amino-acid chain; its full sequence is Probable xyloglucan-specific endo-beta-1,4-glucanase A (238 aa).

A signal peptide spans 1–18 (MKLSLSVALSLAAATAQA). N106 and N171 each carry an N-linked (GlcNAc...) asparagine glycan.

The protein belongs to the glycosyl hydrolase 12 (cellulase H) family.

It localises to the secreted. It carries out the reaction xyloglucan + H2O = xyloglucan oligosaccharides.. Functionally, catalyzes endohydrolysis of 1,4-beta-D-glucosidic linkages in xyloglucan with retention of the beta-configuration of the glycosyl residues. Specific for xyloglucan and does not hydrolyze other cell wall components. This is Probable xyloglucan-specific endo-beta-1,4-glucanase A (xgeA) from Aspergillus fumigatus (strain CBS 144.89 / FGSC A1163 / CEA10) (Neosartorya fumigata).